We begin with the raw amino-acid sequence, 81 residues long: Cortexin-2 (81 aa).

Residues 29-49 (TAFAFVGMLLVFLGLLIVRCF) traverse the membrane as a helical segment.

Belongs to the cortexin family.

It is found in the membrane. This chain is Cortexin-2 (ctxn2), found in Danio rerio (Zebrafish).